The chain runs to 87 residues: MISMEAINNFIKTAPKHDYLTGGVHHSGNVDVLQLSGNKEDGSLVWNHTFVDVDNNVVAKFEDALEKLESLHRRSSSSTGNEEHANV.

This is an uncharacterized protein from Saccharomyces cerevisiae (strain ATCC 204508 / S288c) (Baker's yeast).